The primary structure comprises 281 residues: Bifunctional protein FolD 1 (281 aa).

NADP(+) contacts are provided by residues Gly-165–Ser-167, Ser-190, and Ile-231.

This sequence belongs to the tetrahydrofolate dehydrogenase/cyclohydrolase family. As to quaternary structure, homodimer.

The catalysed reaction is (6R)-5,10-methylene-5,6,7,8-tetrahydrofolate + NADP(+) = (6R)-5,10-methenyltetrahydrofolate + NADPH. It catalyses the reaction (6R)-5,10-methenyltetrahydrofolate + H2O = (6R)-10-formyltetrahydrofolate + H(+). The protein operates within one-carbon metabolism; tetrahydrofolate interconversion. Functionally, catalyzes the oxidation of 5,10-methylenetetrahydrofolate to 5,10-methenyltetrahydrofolate and then the hydrolysis of 5,10-methenyltetrahydrofolate to 10-formyltetrahydrofolate. The protein is Bifunctional protein FolD 1 of Desulfitobacterium hafniense (strain Y51).